Consider the following 374-residue polypeptide: Phosphate-binding protein PstS 1 (374 aa).

A signal peptide spans 1–23 (MKIRLHTLLAVLTAAPLLLAAAG). A lipid anchor (N-palmitoyl cysteine) is attached at Cys-24. Cys-24 is lipidated: S-diacylglycerol cysteine. Positions 25-48 (GSKPPSGSPETGAGAGTVATTPAS) are disordered. Phosphate contacts are provided by residues 58–60 (STL), Ser-88, Asp-106, and 189–191 (SGD).

The protein belongs to the PstS family. In terms of assembly, the complex is composed of two ATP-binding proteins (PstB), two transmembrane proteins (PstC and PstA) and a solute-binding protein (PstS).

The protein localises to the cell membrane. Functionally, part of the ABC transporter complex PstSACB involved in phosphate import. The chain is Phosphate-binding protein PstS 1 (pstS1) from Mycobacterium tuberculosis (strain CDC 1551 / Oshkosh).